The following is a 49-amino-acid chain: Large ribosomal subunit protein bL33B (49 aa).

The protein belongs to the bacterial ribosomal protein bL33 family.

This chain is Large ribosomal subunit protein bL33B (rpmG2), found in Lactococcus lactis subsp. cremoris (Streptococcus cremoris).